The chain runs to 267 residues: Tryptophan synthase alpha chain (267 aa).

Catalysis depends on proton acceptor residues Glu43 and Asp54.

Belongs to the TrpA family. Tetramer of two alpha and two beta chains.

It catalyses the reaction (1S,2R)-1-C-(indol-3-yl)glycerol 3-phosphate + L-serine = D-glyceraldehyde 3-phosphate + L-tryptophan + H2O. The protein operates within amino-acid biosynthesis; L-tryptophan biosynthesis; L-tryptophan from chorismate: step 5/5. The alpha subunit is responsible for the aldol cleavage of indoleglycerol phosphate to indole and glyceraldehyde 3-phosphate. This chain is Tryptophan synthase alpha chain, found in Bacillus subtilis (strain 168).